A 399-amino-acid chain; its full sequence is 3-phosphoshikimate 1-carboxyvinyltransferase (399 aa).

3 residues coordinate 3-phosphoshikimate: Lys19, Ser20, and Arg24. Lys19 serves as a coordination point for phosphoenolpyruvate. Residues Gly83 and Arg111 each coordinate phosphoenolpyruvate. 3-phosphoshikimate contacts are provided by Ser152, Ser153, Gln154, Asp288, Gln310, and Lys314. Residue Gln154 coordinates phosphoenolpyruvate. The Proton acceptor role is filled by Asp288. Arg318, Arg359, and Lys385 together coordinate phosphoenolpyruvate.

It belongs to the EPSP synthase family. Monomer.

It localises to the cytoplasm. It carries out the reaction 3-phosphoshikimate + phosphoenolpyruvate = 5-O-(1-carboxyvinyl)-3-phosphoshikimate + phosphate. It functions in the pathway metabolic intermediate biosynthesis; chorismate biosynthesis. Functionally, catalyzes the transfer of the enolpyruvyl moiety of phosphoenolpyruvate (PEP) to the 5-hydroxyl of shikimate-3-phosphate (S3P) to produce enolpyruvyl shikimate-3-phosphate and inorganic phosphate. This is 3-phosphoshikimate 1-carboxyvinyltransferase from Thermococcus kodakarensis (strain ATCC BAA-918 / JCM 12380 / KOD1) (Pyrococcus kodakaraensis (strain KOD1)).